A 231-amino-acid polypeptide reads, in one-letter code: Potassium/proton antiporter CemA (231 aa).

4 consecutive transmembrane segments (helical) span residues 7–27 (FISL…SLSF), 116–136 (IISF…LIFL), 156–176 (ILLL…ELMI), and 191–211 (IISG…KYWI).

It belongs to the CemA family.

It localises to the plastid. It is found in the chloroplast inner membrane. It catalyses the reaction K(+)(in) + H(+)(out) = K(+)(out) + H(+)(in). In terms of biological role, contributes to K(+)/H(+) antiport activity by supporting proton efflux to control proton extrusion and homeostasis in chloroplasts in a light-dependent manner to modulate photosynthesis. Prevents excessive induction of non-photochemical quenching (NPQ) under continuous-light conditions. Indirectly promotes efficient inorganic carbon uptake into chloroplasts. This Morus indica (Mulberry) protein is Potassium/proton antiporter CemA.